The chain runs to 46 residues: Photosystem II reaction center protein K (46 aa).

A propeptide spanning residues 1-9 (MLILFNTFA) is cleaved from the precursor. A helical transmembrane segment spans residues 25–45 (LPLIPLFFFLLVFVWQAAVGF).

It belongs to the PsbK family. As to quaternary structure, PSII is composed of 1 copy each of membrane proteins PsbA, PsbB, PsbC, PsbD, PsbE, PsbF, PsbH, PsbI, PsbJ, PsbK, PsbL, PsbM, PsbT, PsbX, PsbY, Psb30/Ycf12, peripheral proteins PsbO, CyanoQ (PsbQ), PsbU, PsbV and a large number of cofactors. It forms dimeric complexes.

It is found in the cellular thylakoid membrane. In terms of biological role, one of the components of the core complex of photosystem II (PSII). PSII is a light-driven water:plastoquinone oxidoreductase that uses light energy to abstract electrons from H(2)O, generating O(2) and a proton gradient subsequently used for ATP formation. It consists of a core antenna complex that captures photons, and an electron transfer chain that converts photonic excitation into a charge separation. The sequence is that of Photosystem II reaction center protein K from Prochlorococcus marinus (strain MIT 9301).